Reading from the N-terminus, the 150-residue chain is UPF0178 protein Sbal223_2514 (150 aa).

Belongs to the UPF0178 family.

The protein is UPF0178 protein Sbal223_2514 of Shewanella baltica (strain OS223).